A 352-amino-acid polypeptide reads, in one-letter code: UDP-3-O-acylglucosamine N-acyltransferase (352 aa).

The active-site Proton acceptor is the His246.

It belongs to the transferase hexapeptide repeat family. LpxD subfamily. Homotrimer.

It carries out the reaction a UDP-3-O-[(3R)-3-hydroxyacyl]-alpha-D-glucosamine + a (3R)-hydroxyacyl-[ACP] = a UDP-2-N,3-O-bis[(3R)-3-hydroxyacyl]-alpha-D-glucosamine + holo-[ACP] + H(+). The protein operates within bacterial outer membrane biogenesis; LPS lipid A biosynthesis. Functionally, catalyzes the N-acylation of UDP-3-O-acylglucosamine using 3-hydroxyacyl-ACP as the acyl donor. Is involved in the biosynthesis of lipid A, a phosphorylated glycolipid that anchors the lipopolysaccharide to the outer membrane of the cell. The protein is UDP-3-O-acylglucosamine N-acyltransferase of Chlorobium luteolum (strain DSM 273 / BCRC 81028 / 2530) (Pelodictyon luteolum).